The primary structure comprises 453 residues: MFARVFKAMPARASALTSVNASIQARFMATVRQQRTAHERATFTIRDGPIFHGKSFGARTNISGEAVFTTSLVGYPESLTDPSYRGQILVFTQPLIGNYGVPSAERDQHGLLKYFESPNLQAAGVVVADVAEQYSHWTAVESLGEWCAREGVPAISGVDTRAIVTYLREQGSSLARITVGEEYDADQDEAFTDPEQIHLVRQVSTKAPFHVSAADPQCHVAVIDCGVKENILRSLVSRGASITVFPFDYPIHKVAHHFDGVFISNGPGDPTHCQETTYHLRRLMETSQVPIFGICLGHQLLALAAGARTIKLKYGNRAHNIPALDLSTGRCHITSQNHGYAVDASTLPSDWKPYFVNLNDSSNEGMIHKSRPIFSTQFHPEAKGGPLDSSYLFDIYIDSVKKYKASQAAFHPQRDSLPSPLLVDLLAKERVGVQPTIGMQNIAAAATAAAAAA.

Residues M1–M28 constitute a mitochondrion transit peptide. In terms of domain architecture, Glutamine amidotransferase type-1 spans H219 to S406. The active-site Nucleophile is C295. Active-site residues include H379 and E381.

This sequence belongs to the CarA family. Heterodimer composed of 2 chains; the small (or glutamine) chain promotes the hydrolysis of glutamine to ammonia, which is used by the large (or ammonia) chain to synthesize carbamoyl phosphate.

It is found in the mitochondrion matrix. It catalyses the reaction hydrogencarbonate + L-glutamine + 2 ATP + H2O = carbamoyl phosphate + L-glutamate + 2 ADP + phosphate + 2 H(+). The catalysed reaction is L-glutamine + H2O = L-glutamate + NH4(+). The protein operates within amino-acid biosynthesis; L-arginine biosynthesis; carbamoyl phosphate from bicarbonate: step 1/1. Small subunit of the arginine-specific carbamoyl phosphate synthase (CPSase). CPSase catalyzes the formation of carbamoyl phosphate from the ammonia moiety of glutamine, carbonate, and phosphate donated by ATP, the first step of the arginine biosynthetic pathway. The small subunit (glutamine amidotransferase) binds and cleaves glutamine to supply the large subunit with the substrate ammonia. The polypeptide is Carbamoyl phosphate synthase arginine-specific small chain (cpa1) (Neosartorya fischeri (strain ATCC 1020 / DSM 3700 / CBS 544.65 / FGSC A1164 / JCM 1740 / NRRL 181 / WB 181) (Aspergillus fischerianus)).